Reading from the N-terminus, the 133-residue chain is UPF0102 protein Plav_3586 (133 aa).

This sequence belongs to the UPF0102 family.

The protein is UPF0102 protein Plav_3586 of Parvibaculum lavamentivorans (strain DS-1 / DSM 13023 / NCIMB 13966).